The chain runs to 81 residues: Putative chemokine-related protein B42 (81 aa).

3 cysteine pairs are disulfide-bonded: Cys7–Cys73, Cys8–Cys29, and Cys11–Cys45.

In terms of tissue distribution, expressed in placenta, heart, lung, liver, pancreas, skeletal muscle and brain.

Its subcellular location is the cytoplasm. This is Putative chemokine-related protein B42 from Homo sapiens (Human).